A 1099-amino-acid polypeptide reads, in one-letter code: Carbamoyl phosphate synthase large chain (1099 aa).

The tract at residues 1-402 (MPKREDIKRI…ALGKALRSLE (402 aa)) is carboxyphosphate synthetic domain. ATP is bound by residues arginine 129, arginine 169, glycine 175, glycine 176, glutamate 208, valine 210, glutamate 215, glycine 241, isoleucine 242, histidine 243, glutamine 285, and glutamate 299. The ATP-grasp 1 domain occupies 133 to 328 (KETMEKAGLE…IAKVAALLAV (196 aa)). Positions 285, 299, and 301 each coordinate Mg(2+). Glutamine 285, glutamate 299, and asparagine 301 together coordinate Mn(2+). Residues 403–541 (LDAAPKLDLE…STYNGVENEA (139 aa)) form an oligomerization domain region. Positions 542–944 (VPSDREKIMI…AFAKAQIAAG (403 aa)) are carbamoyl phosphate synthetic domain. Residues 666-857 (AKLLKQIGLK…VARIAAKIMV (192 aa)) enclose the ATP-grasp 2 domain. ATP-binding residues include arginine 702, lysine 741, leucine 743, glutamate 748, glycine 773, valine 774, histidine 775, serine 776, glutamine 816, and glutamate 828. Glutamine 816, glutamate 828, and asparagine 830 together coordinate Mg(2+). 3 residues coordinate Mn(2+): glutamine 816, glutamate 828, and asparagine 830. Residues 945–1099 (NPLPTTGAIL…VRRLTDTWKM (155 aa)) form the MGS-like domain. The interval 945–1099 (NPLPTTGAIL…VRRLTDTWKM (155 aa)) is allosteric domain.

It belongs to the CarB family. Composed of two chains; the small (or glutamine) chain promotes the hydrolysis of glutamine to ammonia, which is used by the large (or ammonia) chain to synthesize carbamoyl phosphate. Tetramer of heterodimers (alpha,beta)4. It depends on Mg(2+) as a cofactor. Requires Mn(2+) as cofactor.

The enzyme catalyses hydrogencarbonate + L-glutamine + 2 ATP + H2O = carbamoyl phosphate + L-glutamate + 2 ADP + phosphate + 2 H(+). The catalysed reaction is hydrogencarbonate + NH4(+) + 2 ATP = carbamoyl phosphate + 2 ADP + phosphate + 2 H(+). Its pathway is amino-acid biosynthesis; L-arginine biosynthesis; carbamoyl phosphate from bicarbonate: step 1/1. It participates in pyrimidine metabolism; UMP biosynthesis via de novo pathway; (S)-dihydroorotate from bicarbonate: step 1/3. Functionally, large subunit of the glutamine-dependent carbamoyl phosphate synthetase (CPSase). CPSase catalyzes the formation of carbamoyl phosphate from the ammonia moiety of glutamine, carbonate, and phosphate donated by ATP, constituting the first step of 2 biosynthetic pathways, one leading to arginine and/or urea and the other to pyrimidine nucleotides. The large subunit (synthetase) binds the substrates ammonia (free or transferred from glutamine from the small subunit), hydrogencarbonate and ATP and carries out an ATP-coupled ligase reaction, activating hydrogencarbonate by forming carboxy phosphate which reacts with ammonia to form carbamoyl phosphate. This is Carbamoyl phosphate synthase large chain from Thermotoga maritima (strain ATCC 43589 / DSM 3109 / JCM 10099 / NBRC 100826 / MSB8).